Consider the following 465-residue polypeptide: MVNEHNVTLSNLIDFGLIKPNQEVKYSYRGVSYTGVILLNGEIHTNGVSFTNPTHWTRTISGNNCSGWGTVKLSGASGPPLLKLKREYLFRVGSTGKNKKKTQKQQQPQQPQPQPQPQQQQQQQQQQQQQQQQQQQPNNNDNDSESEIYKKSDTSETSDQDIDNDDDDAGGQSNNRTTTTTTTTTTTTTTNRQNSPQKKIPSTAITNPKEKKKEKKENILTKKKQQSLQYQQQLQLLQRQNSPPSVSPSSSTSTSSSTSSPASNQIFNSFGPNSQNHNQYGINYNSQQHQPQQYNNNNNNNNNNNNNNNNNNNNNNNNNNNNNNNNNNNNNNNNNNNNNNNSNNNNNNNNNNNNNININNNNNINNNNNINNNSNNQPNCCSPNSNCQYYGYNQQNPPKHQYPNNFLTDGHNPSPPIPVLPFTNQSQNQNQNQNQNQNQNQKSKSKSKSKSKFKSKSKSKSKSKS.

Residues 6–91 form the RAMA domain; it reads NVTLSNLIDF…LKLKREYLFR (86 aa). Disordered stretches follow at residues 95–377 and 392–465; these read TGKN…SNNQ and YNQQ…KSKS. A compositionally biased stretch (low complexity) spans 117–137; sequence PQQQQQQQQQQQQQQQQQQQP. Acidic residues predominate over residues 156–169; the sequence is ETSDQDIDNDDDDA. Over residues 177-190 the composition is skewed to low complexity; it reads TTTTTTTTTTTTTT. Over residues 208–220 the composition is skewed to basic and acidic residues; the sequence is PKEKKKEKKENIL. Positions 214 to 242 form a coiled coil; the sequence is EKKENILTKKKQQSLQYQQQLQLLQRQNS. Positions 226-263 are enriched in low complexity; that stretch reads QSLQYQQQLQLLQRQNSPPSVSPSSSTSTSSSTSSPAS. Residues 264 to 294 show a composition bias toward polar residues; that stretch reads NQIFNSFGPNSQNHNQYGINYNSQQHQPQQY. A compositionally biased stretch (low complexity) spans 295 to 376; the sequence is NNNNNNNNNN…NNNINNNSNN (82 aa). The span at 392-407 shows a compositional bias: polar residues; it reads YNQQNPPKHQYPNNFL. Residues 424-442 are compositionally biased toward low complexity; the sequence is NQSQNQNQNQNQNQNQNQK. Basic residues predominate over residues 443–465; the sequence is SKSKSKSKSKFKSKSKSKSKSKS.

This is an uncharacterized protein from Dictyostelium discoideum (Social amoeba).